The primary structure comprises 209 residues: Large ribosomal subunit protein uL3 (209 aa).

Residues 113–155 (TSRGHGYQGNIKRHHQSRGPETHGSRYHRIPGSMGSIINRVPK) are disordered.

This sequence belongs to the universal ribosomal protein uL3 family. Part of the 50S ribosomal subunit. Forms a cluster with proteins L14 and L19.

Functionally, one of the primary rRNA binding proteins, it binds directly near the 3'-end of the 23S rRNA, where it nucleates assembly of the 50S subunit. This is Large ribosomal subunit protein uL3 from Lactobacillus delbrueckii subsp. bulgaricus (strain ATCC 11842 / DSM 20081 / BCRC 10696 / JCM 1002 / NBRC 13953 / NCIMB 11778 / NCTC 12712 / WDCM 00102 / Lb 14).